The chain runs to 427 residues: G2/mitotic-specific cyclin-B1 (427 aa).

The segment at 33 to 126 is disordered; sequence ATSKPGLRPR…DTPSPSPMET (94 aa). Lysine 73 is modified (N6-acetyllysine). The span at 100–110 shows a compositional bias: basic and acidic residues; that stretch reads EPEHVKEDKLS. The residue at position 120 (serine 120) is a Phosphoserine; by CDK1. Phosphoserine is present on serine 122. Serine 127 is modified (phosphoserine; by PLK1). The residue at position 141 (serine 141) is a Phosphoserine. 2 interaction with CDK2 regions span residues 163–171 and 252–255; these read EYVKDIYAY and YEEM. The residue at position 315 (threonine 315) is a Phosphothreonine.

It belongs to the cyclin family. Cyclin AB subfamily. In terms of assembly, interacts with the CDC2 protein kinase to form a serine/threonine kinase holoenzyme complex also known as maturation promoting factor (MPF). The cyclin subunit imparts substrate specificity to the complex. Binds HEI10. Interacts with catalytically active RALBP1 and CDC2 during mitosis to form an endocytotic complex during interphase. Interacts with CCNF; interaction is required for nuclear localization. Interacts with CDK5RAP3. Interacts with RFPL4A and UBE2A. Interacts with INCA1. In terms of processing, ubiquitinated by the SCF(NIPA) complex during interphase, leading to its destruction. Deubiquitinated by USP22 during G2/M phase. Post-translationally, phosphorylated by PLK1 at Ser-127 on centrosomes during prophase: phosphorylation by PLK1 does not cause nuclear import. Phosphorylation at Ser-141 was also reported to be mediated by PLK1 but Ser-127 seems to be the primary phosphorylation site.

The protein resides in the cytoplasm. The protein localises to the nucleus. It localises to the cytoskeleton. It is found in the microtubule organizing center. Its subcellular location is the centrosome. Functionally, essential for the control of the cell cycle at the G2/M (mitosis) transition. The protein is G2/mitotic-specific cyclin-B1 (CCNB1) of Bos taurus (Bovine).